A 206-amino-acid polypeptide reads, in one-letter code: Small ribosomal subunit protein uS4 (206 aa).

Positions 96-156 (TRLDNVVYRM…EKSRTQARIK (61 aa)) constitute an S4 RNA-binding domain.

The protein belongs to the universal ribosomal protein uS4 family. In terms of assembly, part of the 30S ribosomal subunit. Contacts protein S5. The interaction surface between S4 and S5 is involved in control of translational fidelity.

In terms of biological role, one of the primary rRNA binding proteins, it binds directly to 16S rRNA where it nucleates assembly of the body of the 30S subunit. Its function is as follows. With S5 and S12 plays an important role in translational accuracy. In Shewanella baltica (strain OS223), this protein is Small ribosomal subunit protein uS4.